The following is a 1596-amino-acid chain: MPLLFFALAGCDGSPLCGGLSQRNQFVRLACSVTNFQSSAMFEGSESANTQEVKSESTLGSSLSACKKVLCSNSVLDSSEYWLKNDKTLCRIGFLEDQHDSGCPTICFVNLDRHTSDWHDDNYIKKLASVCPELPRLIESLGVRQPKENEILLLSSLEPPDSCQHDPSHPQSPRTADVCLVHCSCGRRPTQTSSIIFEINKFLIGLQSGQERQKHGRLAGQRAAEDDTNRSVSSIEEDFLTASEQLGEDSEEDPFRNDPENSLMPESVKVLRAAHAQKRSEIEREDSEDSETLCTSSNSQKLSRTYSAPARGRPTTPKQVKESAGHYATNLAESVLQDAFIRLSQDEPSFVAEAAVSVSSDISHSTEAPQRARACSFELPKIVIVQSPDNSEEVTEWPEVQSHATSEHDSGNKAKAKHGTHPPHNSPVGHPAKPLEIALACAASVIGTITTPQVTEQLTLESGEEYECEDEEEESETDQGEYSFSSAVCGMSQVAGAVAAVDLADDSGDNEDLADMYSASMGLLSVAQASTAIPLHCSIAEGTSVEAFRANVAEVLLREASAVFTHRQSYSSVANFLETTHNKIVDGITNPRRPYQEQQDVDNFTQEISDSIFQYALEKAEKRKELEGPGKDAPNIEGFLSDCVNNLLFDVLCVTSRKISDISNCNMESCDGQEGSVGYRAYEADSKAGREALSQLQHLIEPSQAYNHGERRSSVEKLSALIGKREREQKHIQEERENEARLKEPYRLALNRVTATMVKEQSDLQGQLGRSDKNADSALPSAESSPLHMQRGRAGGESETRQQSLSSSSGALVALKMDSGESKTPVTCFAEDLATTVVSMATELAAICLENSSGKQPWFCALNGGSEGPEGLLLPCRTAAALRRKETQNGTSVTKKHRPPRLSEIKRKTEEQPELMERLVNRVVDETVNLDEPTTTDPFALFASEVTARIMNCPELSVVDTSKSGQSSRSRLQCERWSSRGKASSYESIPEEDADPSGTSNTLGPGNRLGHNLSRGSSISKQSSCESITDEFSRFMVNQMETEGRGFDLLLDYYAGKNASSILAAAVQQAASKKNGHLNVRTSSCLSKQSSTESITEEFYRFMLKDMDKENKDYSMTKTKEWSNSLLPPSPRTPFCIRQSSVPDRRSSDSRLTVNSPIKANSFDGFAQNVHGDSLNIYPTNSVSSSGLCKSDSCLYKRGQTDQITDMLIHETWSSSIESLMRKNKIIAEPSEDSLELDSADSQPHVQQFANRLAADIVESGKSQLGGQQDVTAAACQPHIPVGERRHGFKHSRCNNSGNRPGVEHQENSCSSYSSSCVRQAWRGQREVPLIHIEPDQREEASEEKGGVETHHREASHQTQQQSGKGSETATKSSSDSDRVSSVATVPPAGVEVERRSLSASSEESGSGSWAQIATEDDPQEETTSSFIQLSEGNGNSSTSSLGLADLEGFPDFSISSNLISEERERKTSHCQDQADVTLVVLSEVTSGLSTAGSSCQRELLVLNCDLEPDCVDGELRAALQWISASELGVPALYFRKTHQHNLTKLHRVLQLAGQKAWRVGDLFSAVAQFCQLHQDLELKGRPLPSLFDWILKTKR.

Disordered stretches follow at residues 214 to 233, 242 to 319, 389 to 432, 462 to 481, and 760 to 809; these read KHGRLAGQRAAEDDTNRSVS, ASEQ…TPKQ, DNSE…GHPA, SGEEYECEDEEEESETDQGE, and EQSD…SSSS. Residues 292–306 are compositionally biased toward polar residues; the sequence is TLCTSSNSQKLSRTY. Residues 462-479 are compositionally biased toward acidic residues; it reads SGEEYECEDEEEESETDQ. Positions 829-846 are PKA-RII subunit binding domain; sequence FAEDLATTVVSMATELAA. Disordered regions lie at residues 958-1022, 1282-1310, and 1328-1443; these read VVDT…ISKQ, VGERRHGFKHSRCNNSGNRPGVEHQENSC, and VPLI…SSLG. The span at 959 to 971 shows a compositional bias: polar residues; that stretch reads VDTSKSGQSSRSR. The span at 1333–1356 shows a compositional bias: basic and acidic residues; it reads IEPDQREEASEEKGGVETHHREAS. Residues 1357-1372 are compositionally biased toward polar residues; sequence HQTQQQSGKGSETATK. Composition is skewed to low complexity over residues 1398–1409 and 1430–1443; these read LSASSEESGSGS and LSEGNGNSSTSSLG.

It belongs to the AKAP110 family.

The protein resides in the cytoplasm. Functionally, anchoring protein that mediates the subcellular compartmentation of cAMP-dependent protein kinase (PKA type II). This Danio rerio (Zebrafish) protein is A-kinase anchor protein SPHKAP (sphkap).